A 385-amino-acid chain; its full sequence is Zinc finger protein B385R (385 aa).

The segment at 166–190 (LQCPNCGCIQELMGTIFDETHFYNH) adopts a C2H2-type zinc-finger fold.

It belongs to the asfivirus B385R family.

This is Zinc finger protein B385R from Ornithodoros (relapsing fever ticks).